A 131-amino-acid polypeptide reads, in one-letter code: Profilin-6 (131 aa).

A disulfide bridge connects residues Cys13 and Cys115. Positions 81-97 (VVIRGKKGAGGITIKKT) match the Involved in PIP2 interaction motif. Thr111 carries the post-translational modification Phosphothreonine.

Belongs to the profilin family. As to quaternary structure, occurs in many kinds of cells as a complex with monomeric actin in a 1:1 ratio. Phosphorylated by MAP kinases.

The protein resides in the cytoplasm. It localises to the cytoskeleton. In terms of biological role, binds to actin and affects the structure of the cytoskeleton. At high concentrations, profilin prevents the polymerization of actin, whereas it enhances it at low concentrations. This chain is Profilin-6, found in Corylus avellana (European hazel).